The chain runs to 432 residues: Homogentisate 1,2-dioxygenase (432 aa).

Positions 333, 339, and 369 each coordinate Fe cation.

It belongs to the homogentisate dioxygenase family. The cofactor is Fe cation.

It carries out the reaction homogentisate + O2 = 4-maleylacetoacetate + H(+). The protein operates within amino-acid degradation; L-phenylalanine degradation; acetoacetate and fumarate from L-phenylalanine: step 4/6. The sequence is that of Homogentisate 1,2-dioxygenase (hgd) from Dictyostelium discoideum (Social amoeba).